The sequence spans 209 residues: Transcription elongation factor A protein-like 4 (209 aa).

The residue at position 1 (Met-1) is an N-acetylmethionine. Residues 1 to 125 (MEKLYNENEG…VPRKAKRKTN (125 aa)) are disordered. Over residues 25–96 (QDERKPEVAC…GSEREGKPES (72 aa)) the composition is skewed to basic and acidic residues. 2 positions are modified to phosphoserine: Ser-88 and Ser-96.

It belongs to the TFS-II family. TFA subfamily.

Its subcellular location is the nucleus. Its function is as follows. May be involved in transcriptional regulation. This Pongo abelii (Sumatran orangutan) protein is Transcription elongation factor A protein-like 4 (TCEAL4).